A 274-amino-acid chain; its full sequence is tRNA pseudouridine synthase A (274 aa).

Asp52 acts as the Nucleophile in catalysis. Residue Tyr110 participates in substrate binding.

This sequence belongs to the tRNA pseudouridine synthase TruA family. Homodimer.

The catalysed reaction is uridine(38/39/40) in tRNA = pseudouridine(38/39/40) in tRNA. In terms of biological role, formation of pseudouridine at positions 38, 39 and 40 in the anticodon stem and loop of transfer RNAs. This Ralstonia nicotianae (strain ATCC BAA-1114 / GMI1000) (Ralstonia solanacearum) protein is tRNA pseudouridine synthase A.